We begin with the raw amino-acid sequence, 396 residues long: CCA-adding enzyme (396 aa).

ATP is bound by residues glycine 27 and arginine 30. CTP contacts are provided by glycine 27 and arginine 30. Residues aspartate 40 and aspartate 42 each coordinate Mg(2+). 5 residues coordinate ATP: arginine 111, aspartate 154, arginine 157, arginine 160, and arginine 163. Residues arginine 111, aspartate 154, arginine 157, arginine 160, and arginine 163 each coordinate CTP.

Belongs to the tRNA nucleotidyltransferase/poly(A) polymerase family. Bacterial CCA-adding enzyme type 3 subfamily. In terms of assembly, homodimer. Requires Mg(2+) as cofactor.

It carries out the reaction a tRNA precursor + 2 CTP + ATP = a tRNA with a 3' CCA end + 3 diphosphate. It catalyses the reaction a tRNA with a 3' CCA end + 2 CTP + ATP = a tRNA with a 3' CCACCA end + 3 diphosphate. In terms of biological role, catalyzes the addition and repair of the essential 3'-terminal CCA sequence in tRNAs without using a nucleic acid template. Adds these three nucleotides in the order of C, C, and A to the tRNA nucleotide-73, using CTP and ATP as substrates and producing inorganic pyrophosphate. tRNA 3'-terminal CCA addition is required both for tRNA processing and repair. Also involved in tRNA surveillance by mediating tandem CCA addition to generate a CCACCA at the 3' terminus of unstable tRNAs. While stable tRNAs receive only 3'-terminal CCA, unstable tRNAs are marked with CCACCA and rapidly degraded. The protein is CCA-adding enzyme of Bacillus velezensis (strain DSM 23117 / BGSC 10A6 / LMG 26770 / FZB42) (Bacillus amyloliquefaciens subsp. plantarum).